A 421-amino-acid polypeptide reads, in one-letter code: MESPNMRKRLIEMESSLEVKKTATTVKQEPLETSSPLLASMISTAPNPPPTSPHALNYLTLLAAFRQFLHGYIQAGGDENLANTLGNYVAALPMPPNSLNPIGPLNAPKSPFKQQQKFHSIIKAVKREPVSEPAQNAGSGDSSVTLSSALGEDAVPQNRGSCTSMKPVPRFVMLPVVAAQSASPSASGPTSEIQQLREAAFGRYKNVLCVICNEWICSRNRKNHIEAHLNYRPYKCSACSYARRREIFVDQHIRTQHKGVEGVVMLSDVDLHVAMEVDRLAEECVTRTRKIIDTMQEKKDGDFGENKDFDEKALQMMLAEEAENKVVVIESVSQVRPKVANYHRRQRTKVLKKIYDTDVAKQTELKIVKDEEGGVPTMSIKLEEGFEINLEDLMKMVGAGSSITDSNEPGPSEIKKELAEV.

2 C2H2-type zinc fingers span residues V207–H228 and Y234–H257. Residues G400–V421 form a disordered region.

It is found in the nucleus. This is Putative zinc finger protein R05D3.3 from Caenorhabditis elegans.